We begin with the raw amino-acid sequence, 328 residues long: Beta-ketoacyl-[acyl-carrier-protein] synthase III (328 aa).

Catalysis depends on residues cysteine 122 and histidine 255. The segment at 256–260 is ACP-binding; that stretch reads QANIR. The active site involves asparagine 285.

The protein belongs to the thiolase-like superfamily. FabH family. In terms of assembly, homodimer.

It localises to the cytoplasm. It carries out the reaction malonyl-[ACP] + acetyl-CoA + H(+) = 3-oxobutanoyl-[ACP] + CO2 + CoA. It functions in the pathway lipid metabolism; fatty acid biosynthesis. Its function is as follows. Catalyzes the condensation reaction of fatty acid synthesis by the addition to an acyl acceptor of two carbons from malonyl-ACP. Catalyzes the first condensation reaction which initiates fatty acid synthesis and may therefore play a role in governing the total rate of fatty acid production. Possesses both acetoacetyl-ACP synthase and acetyl transacylase activities. Its substrate specificity determines the biosynthesis of branched-chain and/or straight-chain of fatty acids. This is Beta-ketoacyl-[acyl-carrier-protein] synthase III from Herminiimonas arsenicoxydans.